A 200-amino-acid chain; its full sequence is MKYLHTICLLFIFVARGNSRSCDFCHNIGKDCDGYEEECSSPEDVCGKVLLEISSASLSVRTVHKNCFSSSICKLGQFDVNIGHHSYIRGRINCCEKEPCEDQLFPGLPLSKPNGYYCPGAIGLFTKDSTEYEAICKGTQTKCINIVGHRYEPFPGDISYNLKGCVSSCPLLSLSNATFEQNRNYLEKVECKDAIRLASL.

The N-terminal stretch at M1 to S19 is a signal peptide. 8 disulfides stabilise this stretch: C22–C46, C25–C32, C39–C67, C73–C94, C95–C100, C118–C143, C136–C165, and C169–C191. An N-linked (GlcNAc...) asparagine glycan is attached at N176.

Belongs to the CNF-like-inhibitor family. In terms of assembly, occurs as a mixture of oligomers. Tetrameric arrangement appears to be the predominant quaternary structure. In terms of tissue distribution, expressed by the liver.

The protein localises to the secreted. Inhibits the enzymatic activity of phospholipase A2 (PA2). This Lachesis muta muta (Bushmaster) protein is Phospholipase A2 inhibitor LNF1.